A 229-amino-acid polypeptide reads, in one-letter code: Type III pantothenate kinase (229 aa).

D7–D14 provides a ligand contact to ATP. Substrate is bound by residues Y78 and G85–R88. D87 serves as the catalytic Proton acceptor. An ATP-binding site is contributed by T110. T161 lines the substrate pocket.

This sequence belongs to the type III pantothenate kinase family. In terms of assembly, homodimer. NH4(+) is required as a cofactor. Requires K(+) as cofactor.

The protein localises to the cytoplasm. The catalysed reaction is (R)-pantothenate + ATP = (R)-4'-phosphopantothenate + ADP + H(+). It functions in the pathway cofactor biosynthesis; coenzyme A biosynthesis; CoA from (R)-pantothenate: step 1/5. Catalyzes the phosphorylation of pantothenate (Pan), the first step in CoA biosynthesis. The chain is Type III pantothenate kinase from Aquifex aeolicus (strain VF5).